We begin with the raw amino-acid sequence, 147 residues long: Sec-independent protein translocase protein TatB (147 aa).

A helical membrane pass occupies residues 1–21 (MFDVSFTELMVIGVIALVVIG). The tract at residues 67-147 (DETARSMQTS…DKTPPTGSAT (81 aa)) is disordered. Residues 93 to 103 (AELDDTARDAS) are compositionally biased toward basic and acidic residues. Low complexity-rich tracts occupy residues 109-120 (ADAPAEPAPAVA) and 129-147 (APPAAATPADKTPPTGSAT).

It belongs to the TatB family. As to quaternary structure, the Tat system comprises two distinct complexes: a TatABC complex, containing multiple copies of TatA, TatB and TatC subunits, and a separate TatA complex, containing only TatA subunits. Substrates initially bind to the TatABC complex, which probably triggers association of the separate TatA complex to form the active translocon.

The protein localises to the cell inner membrane. Functionally, part of the twin-arginine translocation (Tat) system that transports large folded proteins containing a characteristic twin-arginine motif in their signal peptide across membranes. Together with TatC, TatB is part of a receptor directly interacting with Tat signal peptides. TatB may form an oligomeric binding site that transiently accommodates folded Tat precursor proteins before their translocation. This chain is Sec-independent protein translocase protein TatB, found in Bordetella pertussis (strain Tohama I / ATCC BAA-589 / NCTC 13251).